The chain runs to 501 residues: MSILLYFFFLPVILSLIFMKKFKDSKRNLPPSPPKLPIIGNLHQLRGLFHRCLHDLSKKHGPVLLLRLGFIDMVVISSKEAAEEVLKVHDLECCTRPKTNASSKFSRDGKDIAFAPYGEVSRELRKLSLINFFSTQKVRSFRYIREEENDLMVKKLKESAKKKNTVDLSQTLFYLVGSIIFRATFGQRLDQNKHVNKEKIEELMFEVQKVGSLSSSDIFPAGVGWFMDFVSGRHKTLHKVFVEVDTLLNHVIDGHLKNPEDKTNQDRPDIIDSILETIYKQEQDESFKLTIDHLKGIIQNIYLAGVDTSAITMIWAMAELVKNPRVMKKAQEEIRTCIGIKQKERIEEEDVDKLQYLKLVIKETLRLHPPAPLLLPRETMADIKIQGYDIPRKTILLVNAWSIGRNPELWENPEEFNPERFIDCPMDYKGNSFEMLPFGSGRKICPGIAFGIATVELGLLNLLYYFDWRLAEEDKDIDMEEAGDATIVKKVPLELVPIIHH.

Residues 2-22 (SILLYFFFLPVILSLIFMKKF) form a helical membrane-spanning segment. Residue Cys-445 coordinates heme.

This sequence belongs to the cytochrome P450 family. It depends on heme as a cofactor.

It localises to the membrane. In Arabidopsis thaliana (Mouse-ear cress), this protein is Cytochrome P450 71B3 (CYP71B3).